The primary structure comprises 460 residues: Phosphoenolpyruvate carboxylase (460 aa).

This sequence belongs to the PEPCase type 2 family. In terms of assembly, homotetramer. Requires Mg(2+) as cofactor.

It catalyses the reaction oxaloacetate + phosphate = phosphoenolpyruvate + hydrogencarbonate. Functionally, catalyzes the irreversible beta-carboxylation of phosphoenolpyruvate (PEP) to form oxaloacetate (OAA), a four-carbon dicarboxylic acid source for the tricarboxylic acid cycle. This is Phosphoenolpyruvate carboxylase from Pyrobaculum aerophilum (strain ATCC 51768 / DSM 7523 / JCM 9630 / CIP 104966 / NBRC 100827 / IM2).